A 233-amino-acid chain; its full sequence is Maternal B9.15 protein (233 aa).

The tract at residues 135–165 (KATSDYHSGTSSDEEPTNKEPKTIPKVSNPN) is disordered.

It belongs to the BTG family.

This is Maternal B9.15 protein from Xenopus laevis (African clawed frog).